A 48-amino-acid polypeptide reads, in one-letter code: SPbeta prophage-derived uncharacterized protein YotE (48 aa).

The sequence is that of SPbeta prophage-derived uncharacterized protein YotE (yotE) from Bacillus subtilis (strain 168).